Here is a 470-residue protein sequence, read N- to C-terminus: Meiosis-specific with OB domain-containing protein (470 aa).

The OB DNA-binding region spans 167-272; that stretch reads IINVLAAVRS…EANILLNFIR (106 aa).

The protein belongs to the MEIOB family. Component of a multiprotein complex with RPA2 and SPATA22. Interacts with SPATA22. Interacts with the complex BRME1:HSF2BP:BRCA2.

It is found in the cytoplasm. The protein resides in the nucleus. Its subcellular location is the chromosome. Its function is as follows. Single-stranded DNA-binding protein required for homologous recombination in meiosis I. Required for double strand breaks (DSBs) repair and crossover formation and promotion of faithful and complete synapsis. Not required for the initial loading of recombinases but required to maintain a proper number of RAD51 and DMC1 foci after the zygotene stage. May act by ensuring the stabilization of recombinases, which is required for successful homology search and meiotic recombination. Displays Single-stranded DNA 3'-5' exonuclease activity in vitro. This chain is Meiosis-specific with OB domain-containing protein, found in Rattus norvegicus (Rat).